A 201-amino-acid polypeptide reads, in one-letter code: Putative ankyrin repeat protein YahD (201 aa).

6 ANK repeats span residues 5-34 (NLPA…DINT), 38-67 (QGKT…DINK), 71-100 (TCLN…DLNC), 104-134 (FGGV…NVNQ), 138-172 (VGWT…SPHL), and 176-201 (YGKT…AAGA).

This chain is Putative ankyrin repeat protein YahD (yahD), found in Escherichia coli (strain K12).